Here is a 347-residue protein sequence, read N- to C-terminus: Haptoglobin (347 aa).

The first 18 residues, 1–18, serve as a signal peptide directing secretion; that stretch reads MSDLGAVVALLLWGQLFA. The Sushi domain occupies 31-88; sequence DGCPKPPMIANGYVEHLVRYQCKNYYRLRTEGDGVYTLNNEKQWTNKAVGDKLPECEA. Cystine bridges form between Cys52-Cys86 and Cys90-Cys207. Residues 103–347 are serine protease; that stretch reads ILGGHLDAKG…DWVQKTIAEN (245 aa). N-linked (GlcNAc...) asparagine glycans are attached at residues Asn125, Asn148, Asn152, Asn182, and Asn232. Cystine bridges form between Cys250–Cys281 and Cys292–Cys322. The tract at residues 259 to 264 is interaction with CD163; that stretch reads VPEKKT.

It belongs to the peptidase S1 family. Tetramer of two alpha and two beta chains; disulfide-linked. The hemoglobin/haptoglobin complex is composed of a haptoglobin dimer bound to two hemoglobin alpha-beta dimers. Interacts with CD163. Interacts with ERGIC3. As to expression, expressed by the liver and secreted in plasma.

It is found in the secreted. In terms of biological role, as a result of hemolysis, hemoglobin is found to accumulate in the kidney and is secreted in the urine. Haptoglobin captures, and combines with free plasma hemoglobin to allow hepatic recycling of heme iron and to prevent kidney damage. Haptoglobin also acts as an antioxidant, has antibacterial activity and plays a role in modulating many aspects of the acute phase response. Hemoglobin/haptoglobin complexes are rapidly cleared by the macrophage CD163 scavenger receptor expressed on the surface of liver Kupfer cells through an endocytic lysosomal degradation pathway. This chain is Haptoglobin (HP), found in Papio hamadryas (Hamadryas baboon).